The sequence spans 444 residues: Trimethylamine monooxygenase (444 aa).

Residues Cys-12, Glu-37, Gln-39, Leu-45, and Trp-46 each contribute to the FAD site. NADP(+) contacts are provided by Trp-70 and Asn-72. FAD contacts are provided by Asn-72 and Val-125. NADP(+) is bound by residues Tyr-170, Ser-202, Ser-203, Ser-205, Arg-226, His-227, and Asn-288. Positions 315 and 318 each coordinate FAD. Arg-409 contributes to the NADP(+) binding site.

Belongs to the FMO family. Homodimer. FAD is required as a cofactor.

It catalyses the reaction trimethylamine + NADPH + O2 = trimethylamine N-oxide + NADP(+) + H2O. Its function is as follows. Catalyzes the oxidation of trimethylamine (TMA) to produce trimethylamine N-oxide (TMAO). In vitro, has a broad substrate specificity, oxidizing many nitrogen- and sulfur-containing compounds, including dimethylamine (DMA), dimethylsulfide (DMS), dimethylsulfoxide (DMSO) and methimazole. TMA shows the highest affinity. The chain is Trimethylamine monooxygenase from Pelagibacter sp. (strain HTCC7211).